Here is a 140-residue protein sequence, read N- to C-terminus: Acyl-coenzyme A thioesterase PaaI (140 aa).

Homotetramer.

It participates in aromatic compound metabolism; phenylacetate degradation. Functionally, thioesterase with a preference for ring-hydroxylated phenylacetyl-CoA esters. Hydrolyzes 3,4-dihydroxyphenylacetyl-CoA, 3-hydroxyphenylacetyl-CoA and 4-hydroxyphenylacetyl-CoA. Inactive towards 4-hydroxybenzoyl-CoA and 4-hydroxyphenacyl-CoA. The polypeptide is Acyl-coenzyme A thioesterase PaaI (paaI) (Escherichia coli (strain K12)).